The chain runs to 914 residues: Ubiquitin carboxyl-terminal hydrolase 20 (914 aa).

The UBP-type zinc finger occupies 6 to 111 (DLCPHLDSIG…GSSSKFSEQD (106 aa)). Residues cysteine 8, histidine 10, cysteine 30, cysteine 33, cysteine 43, cysteine 48, cysteine 53, histidine 60, histidine 64, histidine 70, cysteine 83, and cysteine 86 each coordinate Zn(2+). Residues serine 112, serine 132, and serine 134 each carry the phosphoserine modification. Residues 145 to 685 (TGMKNLGNSC…EGYVLFYRKS (541 aa)) form the USP domain. Catalysis depends on cysteine 154, which acts as the Nucleophile. Disordered regions lie at residues 257–347 (LTEA…VDED) and 360–415 (QPAE…ASPV). The residue at position 258 (threonine 258) is a Phosphothreonine. A compositionally biased stretch (basic and acidic residues) spans 259–279 (EARDSDSSDTDEKREGDRSPS). Serine 305 carries the phosphoserine modification. The segment covering 316–332 (EAGRAISEKERMKDRKF) has biased composition (basic and acidic residues). Serine 368 carries the phosphoserine modification. Threonine 377 carries the post-translational modification Phosphothreonine. A phosphoserine mark is found at serine 408 and serine 413. The active-site Proton acceptor is histidine 643. DUSP domains are found at residues 687–780 (EEAM…LYVC) and 789–892 (ALAK…RQSV).

Belongs to the peptidase C19 family. USP20/USP33 subfamily. In terms of assembly, interacts with VHL, leading to its ubiquitination and subsequent degradation. Interacts with CCP110. Interacts with DIO2. Interacts with HIF1A. Interacts with ADRB2. Interacts with USP18. Post-translationally, ubiquitinated via a VHL-dependent pathway for proteasomal degradation.

Its subcellular location is the cytoplasm. It is found in the endoplasmic reticulum. It localises to the perinuclear region. The protein localises to the cytoskeleton. The protein resides in the microtubule organizing center. Its subcellular location is the centrosome. The catalysed reaction is Thiol-dependent hydrolysis of ester, thioester, amide, peptide and isopeptide bonds formed by the C-terminal Gly of ubiquitin (a 76-residue protein attached to proteins as an intracellular targeting signal).. Functionally, deubiquitinating enzyme that plays a role in many cellular processes including autophagy, cellular antiviral response or membrane protein biogenesis. Attenuates TLR4-mediated NF-kappa-B signaling by cooperating with beta-arrestin-2/ARRB2 and inhibiting TRAF6 autoubiquitination. Promotes cellular antiviral responses by deconjugating 'Lys-33' and 'Lys-48'-linked ubiquitination of STING1 leading to its stabilization. Plays an essential role in autophagy induction by regulating the ULK1 stability through deubiquitination of ULK1. Acts as a positive regulator for NF-kappa-B activation by TNF-alpha through deubiquitinating 'Lys-48'-linked polyubiquitination of SQSTM1, leading to its increased stability. Acts as a regulator of G-protein coupled receptor (GPCR) signaling by mediating the deubiquitination beta-2 adrenergic receptor (ADRB2). Plays a central role in ADRB2 recycling and resensitization after prolonged agonist stimulation by constitutively binding ADRB2, mediating deubiquitination of ADRB2 and inhibiting lysosomal trafficking of ADRB2. Upon dissociation, it is probably transferred to the translocated beta-arrestins, possibly leading to beta-arrestins deubiquitination and disengagement from ADRB2. This suggests the existence of a dynamic exchange between the ADRB2 and beta-arrestins. Deubiquitinates DIO2, thereby regulating thyroid hormone regulation. Deubiquitinates HIF1A, leading to stabilize HIF1A and enhance HIF1A-mediated activity. Deubiquitinates MCL1, a pivotal member of the anti-apoptotic Bcl-2 protein family to regulate its stability. Within the endoplasmic reticulum, participates with USP33 in the rescue of post-translationally targeted membrane proteins that are inappropriately ubiquitinated by the cytosolic protein quality control in the cytosol. The protein is Ubiquitin carboxyl-terminal hydrolase 20 (USP20) of Homo sapiens (Human).